The chain runs to 171 residues: MKKITVIQGDITKVSAEAIVNAANSSLLGGGGVDGAIHRAGGPVILAECQLIRNRQGGCKVGDAVITGAGNLPADYVIHTVGPRWSDGRHDEDALLKRAYQSCFKLVDYHGIKTVSFPNISTGIYGFPKERAATIALDVIKHCIAENRTLENVNLVCFDAENYDLYLKLLN.

Residues 1-171 (MKKITVIQGD…NYDLYLKLLN (171 aa)) enclose the Macro domain. Substrate-binding positions include 10-11 (DI), N24, 32-34 (GVD), and 121-125 (STGIY). The active-site Proton acceptor is D34.

The protein belongs to the MacroD-type family. YmdB subfamily. In terms of assembly, homodimer. Interacts with RNase III.

The enzyme catalyses 3''-O-acetyl-ADP-D-ribose + H2O = ADP-D-ribose + acetate + H(+). It catalyses the reaction 2''-O-acetyl-ADP-D-ribose + H2O = ADP-D-ribose + acetate + H(+). Deacetylates O-acetyl-ADP ribose to yield ADP-ribose and free acetate. Down-regulates ribonuclease 3 (RNase III) activity. Acts by interacting directly with the region of the ribonuclease that is required for dimerization/activation. In Pantoea vagans (strain C9-1) (Pantoea agglomerans (strain C9-1)), this protein is O-acetyl-ADP-ribose deacetylase 1.